Consider the following 107-residue polypeptide: Iron-sulfur cluster assembly protein CyaY (107 aa).

The protein belongs to the frataxin family.

Its function is as follows. Involved in iron-sulfur (Fe-S) cluster assembly. May act as a regulator of Fe-S biogenesis. The protein is Iron-sulfur cluster assembly protein CyaY of Neisseria meningitidis serogroup B (strain ATCC BAA-335 / MC58).